An 837-amino-acid polypeptide reads, in one-letter code: Phosphatidylinositol-glycan-specific phospholipase D (837 aa).

The signal sequence occupies residues 1–23 (MSAGRLWSSLLLLLPLFCSKSSS). Residues Asn-94, Asn-267, Asn-287, Asn-303, and Asn-317 are each glycosylated (N-linked (GlcNAc...) asparagine). FG-GAP repeat units lie at residues 364–425 (SPSA…GLPP), 431–492 (NKEG…GRLS), 494–554 (SPNV…RNDK), 561–619 (EADW…SLGK), 629–689 (QSTI…GATR), 701–767 (ALLS…TLGD), and 785–837 (QYVL…FSSD). 5 N-linked (GlcNAc...) asparagine glycosylation sites follow: Asn-477, Asn-496, Asn-586, Asn-599, and Asn-655.

Belongs to the GPLD1 family. In terms of assembly, monomer. As to expression, widely expressed.

It is found in the secreted. The catalysed reaction is a 6-(alpha-D-glucosaminyl)-1-(1,2-diacyl-sn-glycero-3-phospho)-1D-myo-inositol + H2O = 6-(alpha-D-glucosaminyl)-1D-myo-inositol + a 1,2-diacyl-sn-glycero-3-phosphate + H(+). In terms of biological role, this protein hydrolyzes the inositol phosphate linkage in proteins anchored by phosphatidylinositol glycans (GPI-anchor) thus releasing these proteins from the membrane. In Mus musculus (Mouse), this protein is Phosphatidylinositol-glycan-specific phospholipase D (Gpld1).